A 537-amino-acid polypeptide reads, in one-letter code: 2-isopropylmalate synthase (537 aa).

One can recognise a Pyruvate carboxyltransferase domain in the interval 8 to 273 (IIIFDTTLRD…FLGRPVDSME (266 aa)). 4 residues coordinate Mn(2+): Asp-17, His-208, His-210, and Asn-244. The regulatory domain stretch occupies residues 408–537 (RLELVQVSCG…PSEPVLTSKN (130 aa)).

It belongs to the alpha-IPM synthase/homocitrate synthase family. LeuA type 1 subfamily. Homodimer. It depends on Mn(2+) as a cofactor.

The protein localises to the cytoplasm. The catalysed reaction is 3-methyl-2-oxobutanoate + acetyl-CoA + H2O = (2S)-2-isopropylmalate + CoA + H(+). It participates in amino-acid biosynthesis; L-leucine biosynthesis; L-leucine from 3-methyl-2-oxobutanoate: step 1/4. Its function is as follows. Catalyzes the condensation of the acetyl group of acetyl-CoA with 3-methyl-2-oxobutanoate (2-ketoisovalerate) to form 3-carboxy-3-hydroxy-4-methylpentanoate (2-isopropylmalate). In Crocosphaera subtropica (strain ATCC 51142 / BH68) (Cyanothece sp. (strain ATCC 51142)), this protein is 2-isopropylmalate synthase.